Consider the following 311-residue polypeptide: Malate dehydrogenase (311 aa).

Residues 7-13 (GAAGGIG) and Asp-34 contribute to the NAD(+) site. Substrate contacts are provided by Arg-81 and Arg-87. NAD(+) is bound by residues Asn-94 and 117-119 (ITN). Asn-119 and Arg-153 together coordinate substrate. His-177 acts as the Proton acceptor in catalysis. Residue Met-227 participates in NAD(+) binding.

This sequence belongs to the LDH/MDH superfamily. MDH type 1 family. As to quaternary structure, homodimer.

It catalyses the reaction (S)-malate + NAD(+) = oxaloacetate + NADH + H(+). Its function is as follows. Catalyzes the reversible oxidation of malate to oxaloacetate. The sequence is that of Malate dehydrogenase from Haemophilus influenzae (strain PittEE).